The primary structure comprises 265 residues: Ribosomal RNA small subunit methyltransferase A (265 aa).

Asparagine 13, leucine 15, glycine 40, glutamate 61, aspartate 85, and asparagine 103 together coordinate S-adenosyl-L-methionine.

This sequence belongs to the class I-like SAM-binding methyltransferase superfamily. rRNA adenine N(6)-methyltransferase family. RsmA subfamily.

Its subcellular location is the cytoplasm. It catalyses the reaction adenosine(1518)/adenosine(1519) in 16S rRNA + 4 S-adenosyl-L-methionine = N(6)-dimethyladenosine(1518)/N(6)-dimethyladenosine(1519) in 16S rRNA + 4 S-adenosyl-L-homocysteine + 4 H(+). Specifically dimethylates two adjacent adenosines (A1518 and A1519) in the loop of a conserved hairpin near the 3'-end of 16S rRNA in the 30S particle. May play a critical role in biogenesis of 30S subunits. The protein is Ribosomal RNA small subunit methyltransferase A of Aromatoleum aromaticum (strain DSM 19018 / LMG 30748 / EbN1) (Azoarcus sp. (strain EbN1)).